A 308-amino-acid polypeptide reads, in one-letter code: Cysteine proteinase 3 (308 aa).

The first 13 residues, 1–13, serve as a signal peptide directing secretion; that stretch reads MFALILFVSLACA. Positions 14–92 are cleaved as a propeptide — activation peptide; that stretch reads NEVAFKQWAA…TSNVKAAVKA (79 aa). 2 disulfides stabilise this stretch: Cys-112/Cys-153 and Cys-146/Cys-186. Residue Cys-115 is part of the active site. Active-site residues include His-251 and Asn-271.

This sequence belongs to the peptidase C1 family.

It localises to the cytoplasm. The protein resides in the cytoplasmic vesicle. It is found in the phagosome. It catalyses the reaction Hydrolysis of proteins, including basement membrane collagen and azocasein. Preferential cleavage: Arg-Arg-|-Xaa in small molecule substrates including Z-Arg-Arg-|-NHMec.. Cysteine protease which may be involved in pathogenicity. The chain is Cysteine proteinase 3 from Entamoeba histolytica (strain ATCC 30459 / HM-1:IMSS / ABRM).